Consider the following 239-residue polypeptide: Homeobox-leucine zipper protein HOX12 (239 aa).

The tract at residues 25 to 65 is disordered; that stretch reads ATSGGEQKKARQRRRRKVKPEAAAALAGESGGDEQAKKRRL. The homeobox DNA-binding region spans 58-117; it reads EQAKKRRLSDEQARFLEMSFKKERKLETPRKVQLAAELGLDAKQVAVWFQNRRARHKSKL. A coiled-coil region spans residues 107–168; it reads QNRRARHKSK…KLAAVAAATT (62 aa).

The protein belongs to the HD-ZIP homeobox family. Class I subfamily. As to expression, expressed in seedlings, roots, stems, leaf sheaths and panicles.

The protein localises to the nucleus. Its function is as follows. Probable transcription factor. This Oryza sativa subsp. japonica (Rice) protein is Homeobox-leucine zipper protein HOX12 (HOX12).